The sequence spans 111 residues: Large ribosomal subunit protein uL24 (111 aa).

It belongs to the universal ribosomal protein uL24 family. In terms of assembly, part of the 50S ribosomal subunit.

In terms of biological role, one of two assembly initiator proteins, it binds directly to the 5'-end of the 23S rRNA, where it nucleates assembly of the 50S subunit. Its function is as follows. One of the proteins that surrounds the polypeptide exit tunnel on the outside of the subunit. The protein is Large ribosomal subunit protein uL24 of Chlamydia trachomatis serovar A (strain ATCC VR-571B / DSM 19440 / HAR-13).